The primary structure comprises 123 residues: Large ribosomal subunit protein bL21 (123 aa).

Belongs to the bacterial ribosomal protein bL21 family. As to quaternary structure, part of the 50S ribosomal subunit. Contacts protein L20.

In terms of biological role, this protein binds to 23S rRNA in the presence of protein L20. The chain is Large ribosomal subunit protein bL21 from Rhizobium meliloti (strain 1021) (Ensifer meliloti).